Reading from the N-terminus, the 180-residue chain is Methionine-R-sulfoxide reductase B2, mitochondrial (180 aa).

A mitochondrion-targeting transit peptide spans 1–41; sequence MSRFLVRLSTVVSKGATGKSVLPQKRIFAGIRLISSSTGLQ. A MsrB domain is found at 49–178; it reads STDWQRKLSP…NSVALNFKPR (130 aa). Positions 88, 91, 144, and 147 each coordinate Zn(2+). Cys167 acts as the Nucleophile in catalysis.

This sequence belongs to the MsrB Met sulfoxide reductase family. Zn(2+) is required as a cofactor.

It is found in the mitochondrion. It catalyses the reaction L-methionyl-[protein] + [thioredoxin]-disulfide + H2O = L-methionyl-(R)-S-oxide-[protein] + [thioredoxin]-dithiol. It carries out the reaction [thioredoxin]-disulfide + L-methionine + H2O = L-methionine (R)-S-oxide + [thioredoxin]-dithiol. Its function is as follows. Methionine-sulfoxide reductase that specifically reduces methionine (R)-sulfoxide back to methionine. While in many cases, methionine oxidation is the result of random oxidation following oxidative stress, methionine oxidation is also a post-translational modification that takes place on specific residue. Upon oxidative stress, may play a role in the preservation of mitochondrial integrity by decreasing the intracellular reactive oxygen species build-up through its scavenging role, hence contributing to cell survival and protein maintenance. This is Methionine-R-sulfoxide reductase B2, mitochondrial (msrb2) from Danio rerio (Zebrafish).